Consider the following 3413-residue polypeptide: Protein pecanex (3413 aa).

The next 2 membrane-spanning stretches (helical) occupy residues 33–53 (VVHL…YLYF) and 57–77 (WLTW…VKLA). An N-linked (GlcNAc...) asparagine glycan is attached at Asn164. Positions 182–195 (GSQQDQQSLAGSAS) are enriched in low complexity. Disordered regions lie at residues 182–213 (GSQQ…STSA) and 235–314 (GSSA…ENKL). A compositionally biased stretch (polar residues) spans 196–213 (VSKSIRSTGPGGNSSTSA). Asn208 is a glycosylation site (N-linked (GlcNAc...) asparagine). Over residues 302 to 312 (AAAAANSNAEN) the composition is skewed to low complexity. Asn317 carries an N-linked (GlcNAc...) asparagine glycan. Disordered stretches follow at residues 327–363 (PSFL…GDAP), 379–403 (LVNP…RLKH), 540–609 (PGTG…GTGG), and 625–651 (PSVS…NPLP). Over residues 330–354 (LHSQPTNKARGQTNPRQHFITSAPS) the composition is skewed to polar residues. Residues 392–402 (RSSETHDERLK) are compositionally biased toward basic and acidic residues. Positions 541–559 (GTGGSVTGGGGAAGGGGSA) are enriched in gly residues. 2 N-linked (GlcNAc...) asparagine glycosylation sites follow: Asn569 and Asn581. A compositionally biased stretch (polar residues) spans 569 to 582 (NATSYKHGSSQSNK). The span at 599–609 (GTSGGAGGTGG) shows a compositional bias: gly residues. The segment covering 625–634 (PSVSNLSPHP) has biased composition (polar residues). Asn685 is a glycosylation site (N-linked (GlcNAc...) asparagine). Positions 720-730 (EKTAHEEHGDD) are enriched in basic and acidic residues. Disordered stretches follow at residues 720-745 (EKTA…DDEV), 816-873 (HHHS…NRQP), 886-921 (RQEL…DCEQ), and 1002-1021 (KQTK…HSIS). Basic residues predominate over residues 816–826 (HHHSHLHHHKA). The span at 828-846 (SVEGAGPSGGSVAVGVSAG) shows a compositional bias: low complexity. The segment covering 847 to 856 (NDDEDEETED) has biased composition (acidic residues). The N-linked (GlcNAc...) asparagine glycan is linked to Asn857. Low complexity predominate over residues 1008–1021 (SRNSSSSNSTHSIS). Asn1010, Asn1015, Asn1069, and Asn1199 each carry an N-linked (GlcNAc...) asparagine glycan. Transmembrane regions (helical) follow at residues 1315–1335 (MHVL…AAIL) and 1343–1363 (LCAL…VKSV). Asn1375 carries an N-linked (GlcNAc...) asparagine glycan. The next 4 helical transmembrane spans lie at 1376–1396 (KTVA…LLLL), 1423–1443 (VVAL…IIFS), 1474–1494 (LLGS…LYGP), and 1504–1524 (GTQY…GYHL). Residue Asn1572 is glycosylated (N-linked (GlcNAc...) asparagine). Disordered regions lie at residues 1577-1675 (QLTT…TGEP), 1722-1744 (DKIS…GAGT), and 1760-1813 (AEAE…LPDP). Basic and acidic residues-rich tracts occupy residues 1587–1598 (RQTDVKTEHEQI) and 1607–1620 (TVNE…HGAD). A compositionally biased stretch (low complexity) spans 1639-1666 (KTSSLGSSQQTLGKTISSSKRAITASSS). A compositionally biased stretch (polar residues) spans 1725–1738 (SSSSATNPGDMSTL). 5 repeat units span residues 1776 to 1777 (GT), 1778 to 1779 (GT), 1780 to 1781 (GT), 1782 to 1783 (GT), and 1784 to 1785 (GT). The 5 X 2 AA tandem repeats of G-T stretch occupies residues 1776 to 1785 (GTGTGTGTGT). N-linked (GlcNAc...) asparagine glycosylation is found at Asn1791 and Asn1804. Residues 1799–1808 (GNTNSNGTGN) are compositionally biased toward low complexity. The next 5 helical transmembrane spans lie at 1830–1850 (LVVM…TVFT), 1856–1876 (LNVV…YIVP), 1914–1934 (LYIY…AISS), 1940–1960 (QLIV…ICAL), and 1976–1996 (IIIF…ETFI). The tract at residues 2344–2463 (SMGGAPPAQA…HSFANISRQT (120 aa)) is disordered. The span at 2346-2370 (GGAPPAQAPAAAGGASSAPATAGVA) shows a compositional bias: low complexity. Residues Asn2380 and Asn2387 are each glycosylated (N-linked (GlcNAc...) asparagine). Residues 2389 to 2411 (SAHGGQAGPSSGQSKSQSQQQLR) show a composition bias toward low complexity. A compositionally biased stretch (gly residues) spans 2437–2447 (GTGGVTGGGGD). Over residues 2449–2463 (QLSSSHSFANISRQT) the composition is skewed to polar residues. Residues Asn2458, Asn2619, and Asn2717 are each glycosylated (N-linked (GlcNAc...) asparagine). 2 disordered regions span residues 2908–2997 (LNRE…SSGS) and 3198–3242 (ESST…GDDG). Positions 2940–2956 (RRPEVGSSRGRDHERRA) are enriched in basic and acidic residues. N-linked (GlcNAc...) asparagine glycosylation is present at Asn3246. Positions 3295–3413 (AEESKEKGTA…NGESEAGTTV (119 aa)) are disordered. Positions 3310 to 3323 (EGEEGVGEMEIEPE) are enriched in acidic residues. The span at 3364–3377 (TSSTSSAKSTSSPS) shows a compositional bias: low complexity. Over residues 3380-3406 (QEEEDAVDPEETPELASEESPSDENGE) the composition is skewed to acidic residues.

This sequence belongs to the pecanex family.

It is found in the membrane. Its function is as follows. Involved in neurogenesis. The sequence is that of Protein pecanex (pcx) from Drosophila melanogaster (Fruit fly).